The following is a 659-amino-acid chain: Interferon-induced GTP-binding protein Mx3 (659 aa).

A Dynamin-type G domain is found at Asp-65–Pro-338. Residues Gly-75 to Ser-82 form a G1 motif region. Residue Gly-75–Ser-82 coordinates GTP. Residues Val-100–Arg-102 form a G2 motif region. A G3 motif region spans residues Asp-176–Gly-179. GTP contacts are provided by residues Asp-176 to Ile-180 and Thr-245 to Asp-248. Positions Thr-245 to Asp-248 are G4 motif. Residues Lys-277–Gly-280 are G5 motif. The disordered stretch occupies residues Glu-547 to Thr-568. Over residues Arg-559–Thr-568 the composition is skewed to polar residues. The GED domain maps to Met-571–Gly-659.

Belongs to the TRAFAC class dynamin-like GTPase superfamily. Dynamin/Fzo/YdjA family.

Its subcellular location is the cytoplasm. Does not show activity against influenza virus or VSV; although it only differs from Mx2 by 8 positions. The chain is Interferon-induced GTP-binding protein Mx3 (Mx3) from Rattus norvegicus (Rat).